The chain runs to 262 residues: Nitrilase (262 aa).

A CN hydrolase domain is found at 2–237 (VKVAYVQMNP…EEVGVAEIDL (236 aa)). Glu-42 serves as the catalytic Proton acceptor. Lys-113 serves as the catalytic Proton donor. The active-site Nucleophile is Cys-146. 173 to 174 (VM) contacts substrate.

Belongs to the carbon-nitrogen hydrolase superfamily. As to quaternary structure, homodimer.

It carries out the reaction a nitrile + 2 H2O = a carboxylate + NH4(+). Its activity is regulated as follows. Enzymatic activity is inhibited in the presence of acetone, methanol and metal ions such as Ag(2+) and Hg(2+). Is also inhibited by various thiol reagents such as DTNB, p-chloromercuribenzoate, p-hydroxymercuribenzoate, iodacetamide and iodacetate. EDTA has no influence on activity. Its function is as follows. Nitrilase that hydrolyzes preferentially aliphatic nitriles like malononitrile and fumaronitrile in vitro. These dinitriles are converted to the corresponding monoacid mononitriles, showing the enzyme is regioselective. Cannot hydrolyze compounds with a nitrile group bound to an aromatic ring or amino acid. Its biological role is unknown. The sequence is that of Nitrilase from Pyrococcus abyssi (strain GE5 / Orsay).